The primary structure comprises 658 residues: ATP-dependent RNA helicase DDX3Y (658 aa).

Over residues 1–10 the composition is skewed to basic and acidic residues; the sequence is MSHVVVKNDP. The tract at residues 1–141 is disordered; it reads MSHVVVKNDP…DDWSKPLPPS (141 aa). An N-acetylserine modification is found at Ser-2. Polar residues predominate over residues 15-34; the sequence is QLANLDLNSEKQSGGASTAS. Over residues 44–68 the composition is skewed to basic and acidic residues; the sequence is RNREASKGFHDKDSSGWSCSKDKDA. At Lys-55 the chain carries N6-acetyllysine. A phosphoserine mark is found at Ser-81, Ser-85, and Ser-89. The span at 93-128 shows a compositional bias: basic and acidic residues; the sequence is GRFDDRGRSDYDGIGNRDRPGFGRFERSGHSRWCDK. Arg-100 is modified (omega-N-methylarginine). At Ser-101 the chain carries Phosphoserine. The residue at position 103 (Tyr-103) is a Phosphotyrosine. An Omega-N-methylarginine modification is found at Arg-109. 2 positions are modified to phosphoserine: Ser-129 and Ser-181. The short motif at 178–206 is the Q motif element; sequence ENFSDIDMGEIIMGNIELTRYTRPTPVQK. An ATP-binding site is contributed by 198–205; that stretch reads YTRPTPVQ. Positions 209–401 constitute a Helicase ATP-binding domain; the sequence is IPIIKGKRDL…RDFLDEYIFL (193 aa). A Glycyl lysine isopeptide (Lys-Gly) (interchain with G-Cter in SUMO2) cross-link involves residue Lys-213. Position 222–229 (222–229) interacts with ATP; the sequence is AQTGSGKT. A DEAD box motif is present at residues 345–348; that stretch reads DEAD. In terms of domain architecture, Helicase C-terminal spans 412–573; that stretch reads NITQKVVWVE…EVPSWLENMA (162 aa). Phosphoserine is present on Ser-454. Omega-N-methylarginine is present on Arg-588. A phosphoserine mark is found at Ser-590 and Ser-601. The interval 597–625 is disordered; the sequence is DYRQSSGSSSSGFGASRGSSSRSGGSGYG. Residues 601–619 are compositionally biased toward low complexity; sequence SSGSSSSGFGASRGSSSRS. Arg-613 and Arg-628 each carry omega-N-methylarginine.

This sequence belongs to the DEAD box helicase family. DDX3/DED1 subfamily. May interact with TDRD3.

It is found in the cytoplasm. It localises to the nucleus. The enzyme catalyses ATP + H2O = ADP + phosphate + H(+). Its function is as follows. Probable ATP-dependent RNA helicase. May play a role in spermatogenesis. The chain is ATP-dependent RNA helicase DDX3Y (DDX3Y) from Pongo abelii (Sumatran orangutan).